The chain runs to 179 residues: B-cell acute lymphoblastic leukemia-expressed protein (179 aa).

2 disordered regions span residues 1–20 (MMKD…TDLQ) and 65–86 (RDTP…RGKA). The segment covering 10–20 (SWASEESTDLQ) has biased composition (polar residues).

The protein is B-cell acute lymphoblastic leukemia-expressed protein (BLACE) of Homo sapiens (Human).